Consider the following 238-residue polypeptide: Cysteine-rich venom protein (238 aa).

Residues 1 to 19 (MIAFIVLLSLAAVLQQSSG) form the signal peptide. The propeptide occupies 20–27 (TVDFASES). The region spanning 39-164 (KKHNALRRSV…PTKYLYVCQY (126 aa)) is the SCP domain. 8 disulfide bridges follow: cysteine 75–cysteine 153, cysteine 92–cysteine 165, cysteine 148–cysteine 162, cysteine 184–cysteine 191, cysteine 187–cysteine 196, cysteine 200–cysteine 233, cysteine 209–cysteine 227, and cysteine 218–cysteine 231. The 34-residue stretch at 200–233 (CKREDDYSNCKSLAEKNKCMEEWMKSKCPASCFC) folds into the ShKT domain.

Belongs to the CRISP family. In terms of tissue distribution, expressed by the venom gland.

The protein resides in the secreted. Its function is as follows. Blocks olfactory (CNGA2) and retinal (CNGA1) cyclic nucleotide-gated (CNG) ion channel currents. Does not inhibit retinal (CNGA3) currents. It forms high-affinity contacts with the pore turret region and most likely inhibits CNG channel current by blocking the external entrance to the transmembrane pore. Does not affect neither depolarization- nor caffeine-induced contraction arterial smooth muscle. The chain is Cysteine-rich venom protein from Demansia vestigiata (Lesser black whip snake).